The sequence spans 96 residues: UPF0235 protein Sputw3181_1321 (96 aa).

Belongs to the UPF0235 family.

In Shewanella sp. (strain W3-18-1), this protein is UPF0235 protein Sputw3181_1321.